The sequence spans 131 residues: Profilin-3 (131 aa).

The cysteines at positions 13 and 115 are disulfide-linked. The short motif at 81–97 (AVIRGKKGSGGITIKKT) is the Involved in PIP2 interaction element. T111 bears the Phosphothreonine mark.

This sequence belongs to the profilin family. In terms of assembly, occurs in many kinds of cells as a complex with monomeric actin in a 1:1 ratio. Phosphorylated by MAP kinases.

Its subcellular location is the cytoplasm. The protein resides in the cytoskeleton. Functionally, binds to actin and affects the structure of the cytoskeleton. At high concentrations, profilin prevents the polymerization of actin, whereas it enhances it at low concentrations. This is Profilin-3 from Olea europaea (Common olive).